Consider the following 616-residue polypeptide: Dihydroxy-acid dehydratase (616 aa).

Residue aspartate 81 participates in Mg(2+) binding. Residue cysteine 122 coordinates [2Fe-2S] cluster. Mg(2+) is bound by residues aspartate 123 and lysine 124. Lysine 124 carries the N6-carboxylysine modification. Cysteine 195 lines the [2Fe-2S] cluster pocket. Residue glutamate 491 coordinates Mg(2+). The active-site Proton acceptor is the serine 517.

This sequence belongs to the IlvD/Edd family. In terms of assembly, homodimer. [2Fe-2S] cluster serves as cofactor. The cofactor is Mg(2+).

The enzyme catalyses (2R)-2,3-dihydroxy-3-methylbutanoate = 3-methyl-2-oxobutanoate + H2O. It carries out the reaction (2R,3R)-2,3-dihydroxy-3-methylpentanoate = (S)-3-methyl-2-oxopentanoate + H2O. It participates in amino-acid biosynthesis; L-isoleucine biosynthesis; L-isoleucine from 2-oxobutanoate: step 3/4. It functions in the pathway amino-acid biosynthesis; L-valine biosynthesis; L-valine from pyruvate: step 3/4. Functionally, functions in the biosynthesis of branched-chain amino acids. Catalyzes the dehydration of (2R,3R)-2,3-dihydroxy-3-methylpentanoate (2,3-dihydroxy-3-methylvalerate) into 2-oxo-3-methylpentanoate (2-oxo-3-methylvalerate) and of (2R)-2,3-dihydroxy-3-methylbutanoate (2,3-dihydroxyisovalerate) into 2-oxo-3-methylbutanoate (2-oxoisovalerate), the penultimate precursor to L-isoleucine and L-valine, respectively. This Escherichia coli O7:K1 (strain IAI39 / ExPEC) protein is Dihydroxy-acid dehydratase.